The following is an 80-amino-acid chain: Sec-independent protein translocase protein TatA (80 aa).

Residues 1 to 21 form a helical membrane-spanning segment; the sequence is MGISMWQLLIVLLIIVLLFGT. Positions 39 to 80 are disordered; the sequence is KKAMSDGESEEDKEPKKLSQNESRTIEGSVERNDAKTESKHS. Residues 67-80 show a composition bias toward basic and acidic residues; that stretch reads SVERNDAKTESKHS.

The protein belongs to the TatA/E family. As to quaternary structure, the Tat system comprises two distinct complexes: a TatABC complex, containing multiple copies of TatA, TatB and TatC subunits, and a separate TatA complex, containing only TatA subunits. Substrates initially bind to the TatABC complex, which probably triggers association of the separate TatA complex to form the active translocon.

Its subcellular location is the cell inner membrane. Its function is as follows. Part of the twin-arginine translocation (Tat) system that transports large folded proteins containing a characteristic twin-arginine motif in their signal peptide across membranes. TatA could form the protein-conducting channel of the Tat system. In Hahella chejuensis (strain KCTC 2396), this protein is Sec-independent protein translocase protein TatA.